A 366-amino-acid chain; its full sequence is Putative actin-9 (366 aa).

This sequence belongs to the actin family. As to quaternary structure, polymerization of globular actin (G-actin) leads to a structural filament (F-actin) in the form of a two-stranded helix. The binding of profilin to monomeric G-actin cause the sequestration of actin into profilactin complexes, and prevents the polymerization.

Its subcellular location is the cytoplasm. The protein localises to the cytoskeleton. Functionally, actins are highly conserved proteins that are involved in various types of cell motility and are ubiquitously expressed in all eukaryotic cells. Essential component of cell cytoskeleton; plays an important role in cytoplasmic streaming, cell shape determination, cell division, organelle movement and extension growth. The sequence is that of Putative actin-9 (ACT9) from Arabidopsis thaliana (Mouse-ear cress).